Here is a 92-residue protein sequence, read N- to C-terminus: Small ribosomal subunit protein uS19 (92 aa).

This sequence belongs to the universal ribosomal protein uS19 family.

Protein S19 forms a complex with S13 that binds strongly to the 16S ribosomal RNA. The sequence is that of Small ribosomal subunit protein uS19 from Rhodopseudomonas palustris (strain HaA2).